The sequence spans 542 residues: ATP synthase subunit alpha (542 aa).

G173–T180 contributes to the ATP binding site. Residues P518 to K542 are disordered. The span at L519–K542 shows a compositional bias: basic and acidic residues.

The protein belongs to the ATPase alpha/beta chains family. In terms of assembly, F-type ATPases have 2 components, CF(1) - the catalytic core - and CF(0) - the membrane proton channel. CF(1) has five subunits: alpha(3), beta(3), gamma(1), delta(1), epsilon(1). CF(0) has three main subunits: a(1), b(2) and c(9-12). The alpha and beta chains form an alternating ring which encloses part of the gamma chain. CF(1) is attached to CF(0) by a central stalk formed by the gamma and epsilon chains, while a peripheral stalk is formed by the delta and b chains.

The protein resides in the cell membrane. It catalyses the reaction ATP + H2O + 4 H(+)(in) = ADP + phosphate + 5 H(+)(out). Functionally, produces ATP from ADP in the presence of a proton gradient across the membrane. The alpha chain is a regulatory subunit. This is ATP synthase subunit alpha from Bifidobacterium adolescentis (strain ATCC 15703 / DSM 20083 / NCTC 11814 / E194a).